We begin with the raw amino-acid sequence, 202 residues long: Small ribosomal subunit protein uS4 (202 aa).

Positions 22–48 are disordered; that stretch reads TGKELARRPYAPGDHGQGRRGKLSEYG. The region spanning 93 to 154 is the S4 RNA-binding domain; it reads RRLDNMVYRL…KSKKLAVITG (62 aa).

The protein belongs to the universal ribosomal protein uS4 family. As to quaternary structure, part of the 30S ribosomal subunit. Contacts protein S5. The interaction surface between S4 and S5 is involved in control of translational fidelity.

Its function is as follows. One of the primary rRNA binding proteins, it binds directly to 16S rRNA where it nucleates assembly of the body of the 30S subunit. In terms of biological role, with S5 and S12 plays an important role in translational accuracy. This chain is Small ribosomal subunit protein uS4, found in Lactiplantibacillus plantarum (strain ATCC BAA-793 / NCIMB 8826 / WCFS1) (Lactobacillus plantarum).